The primary structure comprises 130 residues: Histone H2A type 1 (130 aa).

Residues 1–22 (MSGRGKQGGKARAKAKTRSSRA) are disordered. Ser2 is subject to N-acetylserine. Ser2 carries the phosphoserine; by RPS6KA5 modification. Citrulline; alternate is present on Arg4. A Symmetric dimethylarginine; by PRMT5; alternate modification is found at Arg4. The residue at position 6 (Lys6) is an N6-(2-hydroxyisobutyryl)lysine. Residues 7-19 (QGGKARAKAKTRS) show a composition bias toward basic residues. Lys10 carries the post-translational modification N6-(2-hydroxyisobutyryl)lysine; alternate. An N6-lactoyllysine; alternate modification is found at Lys10. Lys10 carries the post-translational modification N6-succinyllysine; alternate. Residues Lys14 and Lys16 each participate in a glycyl lysine isopeptide (Lys-Gly) (interchain with G-Cter in ubiquitin) cross-link. At Lys37 the chain carries N6-(2-hydroxyisobutyryl)lysine; alternate. At Lys37 the chain carries N6-(beta-hydroxybutyryl)lysine; alternate. Lys37 bears the N6-crotonyllysine; alternate mark. An N6-(2-hydroxyisobutyryl)lysine mark is found at Lys75 and Lys76. Lys96 carries the post-translational modification N6-(2-hydroxyisobutyryl)lysine; alternate. Lys96 carries the post-translational modification N6-succinyllysine; alternate. Lys96 is modified (N6-glutaryllysine; alternate). Position 100 is an N6-glutaryllysine (Lys100). At Gln105 the chain carries N5-methylglutamine. N6-(2-hydroxyisobutyryl)lysine; alternate is present on Lys119. Lys119 and Lys120 each carry N6-crotonyllysine; alternate. An N6-glutaryllysine; alternate mark is found at Lys119 and Lys120. Lys120 participates in a covalent cross-link: Glycyl lysine isopeptide (Lys-Gly) (interchain with G-Cter in ubiquitin); alternate. Thr121 is subject to Phosphothreonine; by DCAF1. Residue Lys126 is modified to N6-crotonyllysine; alternate. Lys126 is modified (N6-glutaryllysine; alternate).

This sequence belongs to the histone H2A family. As to quaternary structure, the nucleosome is a histone octamer containing two molecules each of H2A, H2B, H3 and H4 assembled in one H3-H4 heterotetramer and two H2A-H2B heterodimers. The octamer wraps approximately 147 bp of DNA. Interacts with VRK1; the interaction is mediated by the nucleosome acidic patch, a cluster of negatively charged residues of H2A and H2B forming a cleft within the nucleosome core. In terms of processing, deiminated on Arg-4 in granulocytes upon calcium entry. Post-translationally, monoubiquitination of Lys-120 (H2AK119Ub) by RING1, TRIM37 and RNF2/RING2 complex gives a specific tag for epigenetic transcriptional repression and participates in X chromosome inactivation of female mammals. It is involved in the initiation of both imprinted and random X inactivation. Ubiquitinated H2A is enriched in inactive X chromosome chromatin. Ubiquitination of H2A functions downstream of methylation of 'Lys-27' of histone H3 (H3K27me). H2AK119Ub by RNF2/RING2 can also be induced by ultraviolet and may be involved in DNA repair. Following DNA double-strand breaks (DSBs), it is ubiquitinated through 'Lys-63' linkage of ubiquitin moieties by the E2 ligase UBE2N and the E3 ligases RNF8 and RNF168, leading to the recruitment of repair proteins to sites of DNA damage. Ubiquitination at Lys-14 and Lys-16 (H2AK13Ub and H2AK15Ub, respectively) in response to DNA damage is initiated by RNF168 that mediates monoubiquitination at these 2 sites, and 'Lys-63'-linked ubiquitin are then conjugated to monoubiquitin; RNF8 is able to extend 'Lys-63'-linked ubiquitin chains in vitro. H2AK119Ub and ionizing radiation-induced 'Lys-63'-linked ubiquitination (H2AK13Ub and H2AK15Ub) are distinct events. Phosphorylation on Ser-2 (H2AS1ph) is enhanced during mitosis. Phosphorylation on Ser-2 by RPS6KA5/MSK1 directly represses transcription. Acetylation of H3 inhibits Ser-2 phosphorylation by RPS6KA5/MSK1. Phosphorylation at Thr-121 (H2AT120ph) by DCAF1 is present in the regulatory region of many tumor suppresor genes and down-regulates their transcription. In terms of processing, symmetric dimethylation on Arg-4 by the PRDM1/PRMT5 complex may play a crucial role in the germ-cell lineage. Post-translationally, glutamine methylation at Gln-105 (H2AQ104me) by FBL is specifically dedicated to polymerase I. It is present at 35S ribosomal DNA locus and impairs binding of the FACT complex. Crotonylation (Kcr) is specifically present in male germ cells and marks testis-specific genes in post-meiotic cells, including X-linked genes that escape sex chromosome inactivation in haploid cells. Crotonylation marks active promoters and enhancers and confers resistance to transcriptional repressors. It is also associated with post-meiotically activated genes on autosomes. In terms of processing, lactylated in macrophages by EP300/P300 by using lactoyl-CoA directly derived from endogenous or exogenous lactate, leading to stimulates gene transcription.

Its subcellular location is the nucleus. The protein resides in the chromosome. Core component of nucleosome. Nucleosomes wrap and compact DNA into chromatin, limiting DNA accessibility to the cellular machineries which require DNA as a template. Histones thereby play a central role in transcription regulation, DNA repair, DNA replication and chromosomal stability. DNA accessibility is regulated via a complex set of post-translational modifications of histones, also called histone code, and nucleosome remodeling. This Bos taurus (Bovine) protein is Histone H2A type 1.